The following is a 926-amino-acid chain: DNA mismatch repair protein MutS (926 aa).

The interval 1 to 60 (MAASQNPIQGSLFGGNEESDLNKAEKLKGSERSNVNLSHQQLKEDASLRPRIKQTPKNPN) is disordered. Over residues 20–31 (DLNKAEKLKGSE) the composition is skewed to basic and acidic residues. 726-733 (GPNASGKS) is an ATP binding site.

It belongs to the DNA mismatch repair MutS family.

In terms of biological role, this protein is involved in the repair of mismatches in DNA. It is possible that it carries out the mismatch recognition step. This protein has a weak ATPase activity. This Prochlorococcus marinus (strain NATL2A) protein is DNA mismatch repair protein MutS.